Here is a 478-residue protein sequence, read N- to C-terminus: tRNA modification GTPase MnmE (478 aa).

Residues R25, E82, and K135 each coordinate (6S)-5-formyl-5,6,7,8-tetrahydrofolate. Positions 231–400 constitute a TrmE-type G domain; that stretch reads GIKVVIAGQP…LREQLLRVVG (170 aa). Position 241 (N241) interacts with K(+). GTP is bound by residues 241 to 246, 260 to 266, and 285 to 288; these read NVGKSS, TPVAGTT, and DTAG. Position 245 (S245) interacts with Mg(2+). T260, V262, and T265 together coordinate K(+). T266 is a Mg(2+) binding site. K478 lines the (6S)-5-formyl-5,6,7,8-tetrahydrofolate pocket.

This sequence belongs to the TRAFAC class TrmE-Era-EngA-EngB-Septin-like GTPase superfamily. TrmE GTPase family. As to quaternary structure, homodimer. Heterotetramer of two MnmE and two MnmG subunits. It depends on K(+) as a cofactor.

It localises to the cytoplasm. In terms of biological role, exhibits a very high intrinsic GTPase hydrolysis rate. Involved in the addition of a carboxymethylaminomethyl (cmnm) group at the wobble position (U34) of certain tRNAs, forming tRNA-cmnm(5)s(2)U34. The protein is tRNA modification GTPase MnmE of Polaromonas naphthalenivorans (strain CJ2).